The following is a 122-amino-acid chain: Large ribosomal subunit protein uL18 (122 aa).

The protein belongs to the universal ribosomal protein uL18 family. In terms of assembly, part of the 50S ribosomal subunit; part of the 5S rRNA/L5/L18/L25 subcomplex. Contacts the 5S and 23S rRNAs.

In terms of biological role, this is one of the proteins that bind and probably mediate the attachment of the 5S RNA into the large ribosomal subunit, where it forms part of the central protuberance. The sequence is that of Large ribosomal subunit protein uL18 from Ruminiclostridium cellulolyticum (strain ATCC 35319 / DSM 5812 / JCM 6584 / H10) (Clostridium cellulolyticum).